Consider the following 176-residue polypeptide: MNKDDDKEGLAMFSALIDGIKPITQNKRHFRTPLKTKQEIELKEQQLHANSYFSDTYQPLLPVQGPMRWLEEGVDSLELKRLRRGDYQPDLLLDLHGYRQSEAKLELAALIQACVKQQSLCCCIMHGYGSGILKQQVPMWLVQHPMVKAFHQAPKEWGGDAALLVLIDIGEQPHRR.

The 76-residue stretch at Leu-93–Asp-168 folds into the Smr domain.

Belongs to the SmrB family. Associates with collided ribosomes, but not with correctly translating polysomes.

Functionally, acts as a ribosome collision sensor. Detects stalled/collided disomes (pairs of ribosomes where the leading ribosome is stalled and a second ribosome has collided with it) and endonucleolytically cleaves mRNA at the 5' boundary of the stalled ribosome. Stalled/collided disomes form a new interface (primarily via the 30S subunits) that binds SmrB. Cleaved mRNA becomes available for tmRNA ligation, leading to ribosomal subunit dissociation and rescue of stalled ribosomes. This is Ribosome rescue factor SmrB from Shewanella baltica (strain OS223).